The sequence spans 210 residues: ATP-dependent Clp protease proteolytic subunit (210 aa).

Ser-107 serves as the catalytic Nucleophile. Residue His-132 is part of the active site.

Belongs to the peptidase S14 family. As to quaternary structure, fourteen ClpP subunits assemble into 2 heptameric rings which stack back to back to give a disk-like structure with a central cavity, resembling the structure of eukaryotic proteasomes.

The protein localises to the cytoplasm. It carries out the reaction Hydrolysis of proteins to small peptides in the presence of ATP and magnesium. alpha-casein is the usual test substrate. In the absence of ATP, only oligopeptides shorter than five residues are hydrolyzed (such as succinyl-Leu-Tyr-|-NHMec, and Leu-Tyr-Leu-|-Tyr-Trp, in which cleavage of the -Tyr-|-Leu- and -Tyr-|-Trp bonds also occurs).. Functionally, cleaves peptides in various proteins in a process that requires ATP hydrolysis. Has a chymotrypsin-like activity. Plays a major role in the degradation of misfolded proteins. The chain is ATP-dependent Clp protease proteolytic subunit from Chromobacterium violaceum (strain ATCC 12472 / DSM 30191 / JCM 1249 / CCUG 213 / NBRC 12614 / NCIMB 9131 / NCTC 9757 / MK).